The primary structure comprises 238 residues: 1-(5-phosphoribosyl)-5-[(5-phosphoribosylamino)methylideneamino] imidazole-4-carboxamide isomerase (238 aa).

The Proton acceptor role is filled by aspartate 8. The active-site Proton donor is the aspartate 129.

This sequence belongs to the HisA/HisF family.

Its subcellular location is the cytoplasm. It catalyses the reaction 1-(5-phospho-beta-D-ribosyl)-5-[(5-phospho-beta-D-ribosylamino)methylideneamino]imidazole-4-carboxamide = 5-[(5-phospho-1-deoxy-D-ribulos-1-ylimino)methylamino]-1-(5-phospho-beta-D-ribosyl)imidazole-4-carboxamide. The protein operates within amino-acid biosynthesis; L-histidine biosynthesis; L-histidine from 5-phospho-alpha-D-ribose 1-diphosphate: step 4/9. The polypeptide is 1-(5-phosphoribosyl)-5-[(5-phosphoribosylamino)methylideneamino] imidazole-4-carboxamide isomerase (Lacticaseibacillus casei (strain BL23) (Lactobacillus casei)).